Here is a 97-residue protein sequence, read N- to C-terminus: Lipolysis-activating peptide 1-alpha chain (97 aa).

The N-terminal stretch at 1–21 (MNITLFCSVFILISLAGLSVS) is a signal peptide. An LCN-type CS-alpha/beta domain is found at 25-88 (PGNYPMSLYG…FWAAHKNHCK (64 aa)). 3 disulfides stabilise this stretch: Cys39-Cys62, Cys48-Cys67, and Cys52-Cys69.

It belongs to the long (3 C-C) scorpion toxin superfamily. Monomer (edited version) and heterodimer (non-edited version) of this alpha chain and a beta chain (AC D9U2A2). As to expression, expressed by the venom gland.

Its subcellular location is the secreted. The heterodimer non-edited LVP1 induces lipolysis in rat adipocytes. Induction of lipolysis by LVP1 appears to be mediated through the beta-2 adrenergic receptor pathway (ADRB2). Functionally, the edited BmKBTx-like, similar to beta-toxins, may modulate voltage-gated sodium channels (Nav) and may block voltage-gated potassium channels (Kv). This Lychas mucronatus (Chinese swimming scorpion) protein is Lipolysis-activating peptide 1-alpha chain.